The chain runs to 366 residues: Heat-inducible transcription repressor HrcA (366 aa).

A compositionally biased stretch (polar residues) spans 298–309 (SSGYGQSSTPSA). The interval 298-318 (SSGYGQSSTPSANVEHEEYDT) is disordered.

The protein belongs to the HrcA family.

Its function is as follows. Negative regulator of class I heat shock genes (grpE-dnaK-dnaJ and groELS operons). Prevents heat-shock induction of these operons. This chain is Heat-inducible transcription repressor HrcA, found in Bifidobacterium animalis subsp. lactis (strain AD011).